Reading from the N-terminus, the 101-residue chain is Co-chaperonin GroES (101 aa).

Belongs to the GroES chaperonin family. As to quaternary structure, heptamer of 7 subunits arranged in a ring. Interacts with the chaperonin GroEL.

It localises to the cytoplasm. Functionally, together with the chaperonin GroEL, plays an essential role in assisting protein folding. The GroEL-GroES system forms a nano-cage that allows encapsulation of the non-native substrate proteins and provides a physical environment optimized to promote and accelerate protein folding. GroES binds to the apical surface of the GroEL ring, thereby capping the opening of the GroEL channel. This chain is Co-chaperonin GroES, found in Thermus thermophilus (strain ATCC BAA-163 / DSM 7039 / HB27).